The sequence spans 344 residues: 4-dimethylallyltryptophan N-methyltransferase easF (344 aa).

This sequence belongs to the methyltransferase superfamily. Homodimer.

It catalyses the reaction 4-(3-methylbut-2-enyl)-L-tryptophan + S-adenosyl-L-methionine = 4-(3-methylbut-2-enyl)-L-abrine + S-adenosyl-L-homocysteine + H(+). The protein operates within alkaloid biosynthesis; ergot alkaloid biosynthesis. In terms of biological role, 4-dimethylallyltryptophan N-methyltransferase; part of the gene cluster that mediates the biosynthesis of fungal ergot alkaloid. DmaW catalyzes the first step of ergot alkaloid biosynthesis by condensing dimethylallyl diphosphate (DMAP) and tryptophan to form 4-dimethylallyl-L-tryptophan. The second step is catalyzed by the methyltransferase easF that methylates 4-dimethylallyl-L-tryptophan in the presence of S-adenosyl-L-methionine, resulting in the formation of 4-dimethylallyl-L-abrine. The catalase easC and the FAD-dependent oxidoreductase easE then transform 4-dimethylallyl-L-abrine to chanoclavine-I which is further oxidized by easD in the presence of NAD(+), resulting in the formation of chanoclavine-I aldehyde. Agroclavine dehydrogenase easG then mediates the conversion of chanoclavine-I aldehyde to agroclavine via a non-enzymatic adduct reaction: the substrate is an iminium intermediate that is formed spontaneously from chanoclavine-I aldehyde in the presence of glutathione. The presence of easA is not required to complete this reaction. Further conversion of agroclavine to paspalic acid is a two-step process involving oxidation of agroclavine to elymoclavine and of elymoclavine to paspalic acid, the second step being performed by the elymoclavine oxidase cloA. Paspalic acid is then further converted to D-lysergic acid. Ergopeptines are assembled from D-lysergic acid and three different amino acids by the D-lysergyl-peptide-synthetases composed each of a monomudular and a trimodular nonribosomal peptide synthetase subunit. LpsB and lpsC encode the monomodular subunits responsible for D-lysergic acid activation and incorporation into the ergopeptine backbone. LpsA1 and A2 subunits encode the trimodular nonribosomal peptide synthetase assembling the tripeptide portion of ergopeptines. LpsA1 is responsible for formation of the major ergopeptine, ergotamine, and lpsA2 for alpha-ergocryptine, the minor ergopeptine of the total alkaloid mixture elaborated by C.purpurea. D-lysergyl-tripeptides are assembled by the nonribosomal peptide synthetases and released as N-(D-lysergyl-aminoacyl)-lactams. Cyclolization of the D-lysergyl-tripeptides is performed by the Fe(2+)/2-ketoglutarate-dependent dioxygenase easH which introduces a hydroxyl group into N-(D-lysergyl-aminoacyl)-lactam at alpha-C of the aminoacyl residue followed by spontaneous condensation with the terminal lactam carbonyl group. The chain is 4-dimethylallyltryptophan N-methyltransferase easF from Claviceps purpurea (Ergot fungus).